A 786-amino-acid polypeptide reads, in one-letter code: MVNVERYEIFLDFNEYSYEGMEKIKMKSDGEKVELDSVGLEIKEVKADGKQVKYETKNEKLIVYSKVNEELEIRFSGKADNKSILGIYVAPYDGNYLITTQFEPIYARKFIPCFDSPDMKAVFKLSVRVNRGQKVISNMPIISIRDDGEKIVYEFDETPRMSTYLLYLGIGDFEEISDESKKPKIILATTPGKSKRGIFAIEVARKVIDYYEKYFEIPYQLPKLHLIEIPEFAAGAMENWGAITFRESALLADESSSVSQKLSVSAVIAHELAHQWFGDMVTLKWWDDLWLNESFATFMAYKSLKEIFPQWESEGHFIYDETLSALTEDSLLNTHPIETHVKDPHEIEEMFDNISYGKGASILRMIEAYVGEEVFRRGVVNYLNKFKFSNASGSDLWNSISEAYGSDISQIMAEWITKPGYPVITVNVEGDSVEFFQRRFTLLNVNDSTIYKVPLTFEVNGKRQTLLLDKESVKLNFDNAVSSIKVNLNRTGFYRVLYKPFELSFSSTLNSYEELGLVNDYWNFLLAGLESIKTYLTLIKRFSNTRNSFLSREIAFELMTLYYINKDKYYSIARDFLLNQIKIYRNAKDDLGKMAYSSIIRSLAIVDDDFALGLSNLFQYYEQLDSNIKGAVAIAYAISTSDFNGLLDKYKSFNSDEEKLRMIDAITNIRDKSIVEKLAMLVFNRTIKYQEAPHVINSLSNNPYVREELCNFLQGNFDMIKQFVVTVAGMWGLFYIIRGPMIMCGVNKPEETIEFLDRIKTKEIARSVEITKEYIKVYNRVKNLDL.

Residues Glu103 and 235 to 239 (GAMEN) contribute to the substrate site. Position 270 (His270) interacts with Zn(2+). The active-site Proton acceptor is the Glu271. His274 and Glu293 together coordinate Zn(2+).

This sequence belongs to the peptidase M1 family. It depends on Zn(2+) as a cofactor.

It localises to the cytoplasm. This chain is Probable aminopeptidase 1 (ape1), found in Sulfurisphaera tokodaii (strain DSM 16993 / JCM 10545 / NBRC 100140 / 7) (Sulfolobus tokodaii).